Reading from the N-terminus, the 294-residue chain is Pyridoxal 5'-phosphate synthase subunit PdxS (294 aa).

Aspartate 24 is a D-ribose 5-phosphate binding site. Lysine 81 functions as the Schiff-base intermediate with D-ribose 5-phosphate in the catalytic mechanism. A D-ribose 5-phosphate-binding site is contributed by glycine 153. Arginine 165 provides a ligand contact to D-glyceraldehyde 3-phosphate. D-ribose 5-phosphate contacts are provided by residues glycine 214 and 235–236 (GS).

This sequence belongs to the PdxS/SNZ family. As to quaternary structure, homohexamer and homododecamer. In the presence of PdxT, forms a dodecamer of heterodimers.

The catalysed reaction is aldehydo-D-ribose 5-phosphate + D-glyceraldehyde 3-phosphate + L-glutamine = pyridoxal 5'-phosphate + L-glutamate + phosphate + 3 H2O + H(+). The protein operates within cofactor biosynthesis; pyridoxal 5'-phosphate biosynthesis. Functionally, catalyzes the formation of pyridoxal 5'-phosphate from ribose 5-phosphate (RBP), glyceraldehyde 3-phosphate (G3P) and ammonia. The ammonia is provided by the PdxT subunit. Can also use ribulose 5-phosphate and dihydroxyacetone phosphate as substrates, resulting from enzyme-catalyzed isomerization of RBP and G3P, respectively. This Geobacillus kaustophilus (strain HTA426) protein is Pyridoxal 5'-phosphate synthase subunit PdxS.